We begin with the raw amino-acid sequence, 378 residues long: Alanine racemase (378 aa).

Lys35 functions as the Proton acceptor; specific for D-alanine in the catalytic mechanism. At Lys35 the chain carries N6-(pyridoxal phosphate)lysine. Arg133 contacts substrate. Tyr266 serves as the catalytic Proton acceptor; specific for L-alanine. Met314 is a binding site for substrate.

This sequence belongs to the alanine racemase family. The cofactor is pyridoxal 5'-phosphate.

It catalyses the reaction L-alanine = D-alanine. It functions in the pathway amino-acid biosynthesis; D-alanine biosynthesis; D-alanine from L-alanine: step 1/1. Functionally, catalyzes the interconversion of L-alanine and D-alanine. May also act on other amino acids. The polypeptide is Alanine racemase (alr) (Beutenbergia cavernae (strain ATCC BAA-8 / DSM 12333 / CCUG 43141 / JCM 11478 / NBRC 16432 / NCIMB 13614 / HKI 0122)).